The primary structure comprises 321 residues: UPF0676 protein C1494.01 (321 aa).

The 109-residue stretch at 159-267 (EEDVLRLLKY…RQTIAYFVTP (109 aa)) folds into the Fe2OG dioxygenase domain.

This sequence belongs to the UPF0676 family.

The protein resides in the cytoplasm. It localises to the nucleus. The protein is UPF0676 protein C1494.01 of Schizosaccharomyces pombe (strain 972 / ATCC 24843) (Fission yeast).